A 761-amino-acid chain; its full sequence is Zinc finger protein 287 (761 aa).

Positions R49–L131 constitute an SCAN box domain. A disordered region spans residues E134–H154. The KRAB domain maps to M170–P238. C2H2-type zinc fingers lie at residues Y368–H390, Y396–H418, Y424–H446, Y452–H474, Y480–H502, Y508–H530, Y536–H558, Y564–H586, Y592–H614, Y620–H642, F648–H670, Y676–H698, Y704–H726, and Y732–H754.

This sequence belongs to the krueppel C2H2-type zinc-finger protein family.

Its subcellular location is the nucleus. May be involved in transcriptional regulation. The protein is Zinc finger protein 287 of Homo sapiens (Human).